We begin with the raw amino-acid sequence, 263 residues long: Proliferating cell nuclear antigen (263 aa).

A DNA-binding region spans residues 61 to 80 (RCDRTINLGLSLANMSKALK).

Belongs to the PCNA family. In terms of assembly, homotrimer. Forms a complex with activator 1 heteropentamer in the presence of ATP.

Its subcellular location is the nucleus. This protein is an auxiliary protein of DNA polymerase delta and is involved in the control of eukaryotic DNA replication by increasing the polymerase's processibility during elongation of the leading strand. This chain is Proliferating cell nuclear antigen (pcn-1), found in Caenorhabditis elegans.